The primary structure comprises 551 residues: Trehalose-6-phosphate hydrolase (551 aa).

The Nucleophile role is filled by Asp-200. The active-site Proton donor is Glu-251.

This sequence belongs to the glycosyl hydrolase 13 family.

It localises to the cytoplasm. The catalysed reaction is alpha,alpha-trehalose 6-phosphate + H2O = D-glucose 6-phosphate + D-glucose. In terms of biological role, hydrolyzes trehalose-6-phosphate to glucose and glucose 6-phosphate. Can also very effectively hydrolyze p-nitrophenyl-alpha-D-glucopyranoside, but it does not recognize trehalose, sucrose, maltose, isomaltose, or maltodextrins. This is Trehalose-6-phosphate hydrolase (treC) from Escherichia coli (strain K12).